The sequence spans 128 residues: Aspartate 1-decarboxylase (128 aa).

Catalysis depends on serine 25, which acts as the Schiff-base intermediate with substrate; via pyruvic acid. Serine 25 bears the Pyruvic acid (Ser) mark. Threonine 57 is a substrate binding site. The active-site Proton donor is the tyrosine 58. 73–75 (GAA) lines the substrate pocket.

This sequence belongs to the PanD family. As to quaternary structure, heterooctamer of four alpha and four beta subunits. Requires pyruvate as cofactor. Is synthesized initially as an inactive proenzyme, which is activated by self-cleavage at a specific serine bond to produce a beta-subunit with a hydroxyl group at its C-terminus and an alpha-subunit with a pyruvoyl group at its N-terminus.

The protein resides in the cytoplasm. The catalysed reaction is L-aspartate + H(+) = beta-alanine + CO2. Its pathway is cofactor biosynthesis; (R)-pantothenate biosynthesis; beta-alanine from L-aspartate: step 1/1. Catalyzes the pyruvoyl-dependent decarboxylation of aspartate to produce beta-alanine. The chain is Aspartate 1-decarboxylase from Chlorobium luteolum (strain DSM 273 / BCRC 81028 / 2530) (Pelodictyon luteolum).